Consider the following 348-residue polypeptide: tRNA N6-adenosine threonylcarbamoyltransferase (348 aa).

Positions 115 and 119 each coordinate Fe cation. Substrate contacts are provided by residues 138 to 142 (LVSGG), D171, G184, and N276. D304 serves as a coordination point for Fe cation.

This sequence belongs to the KAE1 / TsaD family. The cofactor is Fe(2+).

The protein resides in the cytoplasm. The enzyme catalyses L-threonylcarbamoyladenylate + adenosine(37) in tRNA = N(6)-L-threonylcarbamoyladenosine(37) in tRNA + AMP + H(+). Functionally, required for the formation of a threonylcarbamoyl group on adenosine at position 37 (t(6)A37) in tRNAs that read codons beginning with adenine. Is involved in the transfer of the threonylcarbamoyl moiety of threonylcarbamoyl-AMP (TC-AMP) to the N6 group of A37, together with TsaE and TsaB. TsaD likely plays a direct catalytic role in this reaction. The protein is tRNA N6-adenosine threonylcarbamoyltransferase of Xylella fastidiosa (strain 9a5c).